We begin with the raw amino-acid sequence, 109 residues long: Con-Ins K2 (109 aa).

Residues 1 to 24 (MTTSSYFLLVALGLLLYVCQSSFG) form the signal peptide. Residues 25 to 29 (NPHTR) constitute a propeptide that is removed on maturation. 3 disulfide bridges follow: C41–C90, C53–C103, and C89–C94. Residue E44 is modified to 4-carboxyglutamate. Residues 57 to 83 (RKRRGFPSMLKARAKRNEAFLLQRDGR) constitute a propeptide, c peptide.

The protein belongs to the insulin family. In terms of assembly, heterodimer of A and B chains; disulfide-linked. As to expression, expressed by the venom gland.

It localises to the secreted. Functionally, this venom insulin, from a fish-hunting cone snail, facilitates prey capture by rapidly inducing hypoglycemic shock. It is one of the smallest known insulin found in nature and lacks the C-terminal segment of the B chain that, in human insulin, mediates engagement of the insulin receptor (INSR) and assembly of the hormone's hexameric storage form. Despite lacking this segment, it both binds and activates human insulin receptor (long isoform (HIR-B)) with a moderate potency (EC(50)=373.2 nM). In vivo, intraperitoneal injection of this peptide into zebrafish lowers blood glucose with a lower potency than human insulin. In addition, when applied to water, this peptide reduces overall locomotor activity of zebrafish larvae, observed as a significant decrease in the percentage of time spent swimming and movement frequency. When tested on a mouse model of diabetes, this insulin also lowers blood glucose with a 20-fold lower potency than human insulin. This Conus kinoshitai (Kinoshita's cone) protein is Con-Ins K2.